The following is a 297-amino-acid chain: Adrenocorticotropic hormone receptor (297 aa).

Over 1 to 23 (MKHITDLYESVNSTMSNKSDCPP) the chain is Extracellular. 2 N-linked (GlcNAc...) asparagine glycosylation sites follow: Asn-12 and Asn-17. 2 disulfide bridges follow: Cys-21–Cys-253 and Cys-245–Cys-251. Residues 24–49 (VVLPEEVFFTISVIGVLENLIVLLAV) traverse the membrane as a helical segment. Topologically, residues 50 to 58 (IKNKNLQSP) are cytoplasmic. The helical transmembrane segment at 59 to 79 (MYFFICSLAISDMLGSLYKIL) threads the bilayer. The Extracellular portion of the chain corresponds to 80–104 (ENILIIFRNMGYLEPRGGFESTADD). A helical membrane pass occupies residues 105 to 126 (VVDSLFILSLLGSICSLSAIAA). Residues 127–147 (DRYITIFHALQYQRLVTPRRA) lie on the Cytoplasmic side of the membrane. The chain crosses the membrane as a helical span at residues 148–168 (AVVLLIIWACCIGSGITIVTF). The Extracellular segment spans residues 169 to 180 (SHHVPAVIAFTA). The helical transmembrane segment at 181 to 199 (LFPLMLVFILCLYGHMFLL) threads the bilayer. The Cytoplasmic segment spans residues 200–217 (ARSHARRVSTLPRANMKG). Residues 218–244 (AITLTVLLGVFIFCWAPFVLHILLMTF) form a helical membrane-spanning segment. Topologically, residues 245-256 (CPADPYCACYLA) are extracellular. Residues 257–278 (LFQVNAVLIMCNAIIDPFIYAF) traverse the membrane as a helical segment. Residues 279 to 297 (RSPELRDAFKKMIICKRYP) are Cytoplasmic-facing. The S-palmitoyl cysteine moiety is linked to residue Cys-293.

It belongs to the G-protein coupled receptor 1 family. In terms of assembly, homodimer. Interacts with corticotropin (ACTH). Interacts with MRAP; this interaction targets MC2R to the plasma membrane. Interacts with MRAP2; competing with MRAP for binding to MC2R and impairing the binding of corticotropin (ACTH). Ubiquitinated by MGRN1 that may be involved in post-endocytic trafficking and/or degradation of internalized receptor. In terms of tissue distribution, expressed in skin and adrenal gland tissues.

The protein resides in the cell membrane. Functionally, hormone receptor primarily expressed in adrenal cortex that plays a key role in regulating adrenocortical function. Upon corticotropin (ACTH) binding, facilitates the release of adrenal glucocorticoids, including cortisol and corticosterone. In addition, MC2R is required for fetal and neonatal adrenal gland development. Mechanistically, activates adenylate cyclase (cAMP), the MAPK cascade as well as the cAMP-dependent protein kinase A pathway leading to steroidogenic factor 1/NR5A1-mediated transcriptional activation. This Sus scrofa (Pig) protein is Adrenocorticotropic hormone receptor (MC2R).